We begin with the raw amino-acid sequence, 541 residues long: Tegument protein UL21 homolog (541 aa).

The protein belongs to the alphaherpesvirinae UL21 protein family. Interacts (via C-terminus) with UL16.

The protein localises to the virion tegument. The protein resides in the host cytoplasm. It localises to the host nucleus. Its function is as follows. May participate in DNA packaging/capsid maturation events. Promotes efficient incorporation of tegument proteins UL46, UL49, and US3 homologs into virions. May also play a role in capsid transport to the trans-Golgi network (TGN). The protein is Tegument protein UL21 homolog of Homo sapiens (Human).